The chain runs to 119 residues: MARVKRGVIAHARHKKVIKLAKGYYGARSRVYRVANQAVIKSGQYSYRDRRNKKRDFRKLWIIRINAAVKNYNLSYSKFIYGLKLSSININRKILSEIAIFDKISFKKLVDYSKNALSI.

The protein belongs to the bacterial ribosomal protein bL20 family.

Its function is as follows. Binds directly to 23S ribosomal RNA and is necessary for the in vitro assembly process of the 50S ribosomal subunit. It is not involved in the protein synthesizing functions of that subunit. This Buchnera aphidicola subsp. Cinara cedri (strain Cc) protein is Large ribosomal subunit protein bL20.